A 450-amino-acid chain; its full sequence is Phosphoglucosamine mutase (450 aa).

The active-site Phosphoserine intermediate is the Ser101. Mg(2+)-binding residues include Ser101, Asp240, Asp242, and Asp244. Ser101 bears the Phosphoserine mark.

The protein belongs to the phosphohexose mutase family. It depends on Mg(2+) as a cofactor. In terms of processing, activated by phosphorylation. Phosphorylated by StkP in vivo.

It carries out the reaction alpha-D-glucosamine 1-phosphate = D-glucosamine 6-phosphate. Catalyzes the conversion of glucosamine-6-phosphate to glucosamine-1-phosphate. In Streptococcus pneumoniae (strain ATCC BAA-255 / R6), this protein is Phosphoglucosamine mutase.